Reading from the N-terminus, the 130-residue chain is Small ribosomal subunit protein uS9 (130 aa).

This sequence belongs to the universal ribosomal protein uS9 family.

The sequence is that of Small ribosomal subunit protein uS9 from Anoxybacillus flavithermus (strain DSM 21510 / WK1).